Here is a 262-residue protein sequence, read N- to C-terminus: Ferric siderophore reductase (262 aa).

Positions 244, 245, 256, and 259 each coordinate [2Fe-2S] cluster.

Monomer. [2Fe-2S] cluster serves as cofactor.

It is found in the cytoplasm. Its subcellular location is the cell inner membrane. Its activity is regulated as follows. Displays pH dependent redox properties. SufD is necessary for the stability of FhuF. Its function is as follows. Siderophore-iron reductase which is involved in iron removal from the hydroxamate-type siderophores coprogen, ferrichrome and ferrioxamine B after their transport into the cell. Binds both the iron-loaded and the apo forms of ferrichrome. This Escherichia coli (strain K12) protein is Ferric siderophore reductase (fhuF).